Consider the following 330-residue polypeptide: Membrane progestin receptor gamma (330 aa).

At 1–51 (MLSLKLPRLFSIDQIPQVFHEQGILFGYRHPQSSATACILSLFQMTNETLN) the chain is on the cytoplasmic side. The helical transmembrane segment at 52-72 (IWTHLLPFWFFAWRFVTALYM) threads the bilayer. Topologically, residues 73 to 80 (TDIKNDSY) are extracellular. Residues 81–101 (SWPMLVYMCTSCVYPLVSSCA) form a helical membrane-spanning segment. The Cytoplasmic segment spans residues 102-113 (HTFSSMSKNARH). Residues 114-134 (ICYFLDYGAVNLFSLGSAIAY) form a helical membrane-spanning segment. Topologically, residues 135–141 (SAYTFPD) are extracellular. Residues 142–162 (ALMCTTFHDYYVALAVLNTIL) traverse the membrane as a helical segment. At 163 to 186 (STGLSCYSRFLEIQKPRLCKVIRV) the chain is on the cytoplasmic side. The helical transmembrane segment at 187 to 207 (LAFAYPYTWDSLPIFYRLFLF) threads the bilayer. Residues 208–253 (PGESAQNEATSYHQKHMIMTLLASFLYSAHLPERLAPGRFDYIGHS) lie on the Extracellular side of the membrane. A helical transmembrane segment spans residues 254 to 274 (HQLFHVCVILATHMQMEAILL). Over 275 to 294 (DKTLRKEWLLATSKPFSFSQ) the chain is Cytoplasmic. A helical membrane pass occupies residues 295–315 (IAGAILLCIIFSLSNIIYFSA). Over 316-330 (ALYRIPKPELHKKET) the chain is Extracellular.

This sequence belongs to the ADIPOR family. As to expression, expressed in the brain, lung, kidney, colon, adrenal and lung.

The protein resides in the cell membrane. In terms of biological role, plasma membrane progesterone (P4) receptor coupled to G proteins. Seems to act through a G(i) mediated pathway. May be involved in oocyte maturation. The sequence is that of Membrane progestin receptor gamma from Homo sapiens (Human).